Consider the following 377-residue polypeptide: Palmitoyltransferase ZDHHC16 (377 aa).

At 1 to 77 (MRGQRSLLLG…VYWLVDNVIR (77 aa)) the chain is on the cytoplasmic side. The helical transmembrane segment at 78–98 (WFGVVFVVLVIVLTGSIVAIA) threads the bilayer. The Lumenal portion of the chain corresponds to 99 to 116 (YLCVLPLILRTYSVPRLC). The helical transmembrane segment at 117-137 (WHFFYSHWNLILIVFHYYQAI) threads the bilayer. Over 138–198 (TTPPGYPPQG…NNCVGHYNHR (61 aa)) the chain is Cytoplasmic. Residues 155–205 (SICKKCIYPKPARTHHCSICNRCVLKMDHHCPWLNNCVGHYNHRYFFSFCF) form the DHHC domain. The active-site S-palmitoyl cysteine intermediate is the cysteine 185. Residues 199-219 (YFFSFCFFMTLGCVYCSYGSW) form a helical membrane-spanning segment. The Lumenal portion of the chain corresponds to 220 to 266 (DLFREAYAAIEKMKQLDKNKLQAVANQTYHQTPPPTFSFRERMTHKS). A helical membrane pass occupies residues 267 to 287 (LVYLWFLCSSVALALGALTVW). The Cytoplasmic segment spans residues 288–377 (HAVLISRGET…TAHSASVMAV (90 aa)).

Belongs to the DHHC palmitoyltransferase family. Interacts with ABL1. Interacts with COPS5/JAB1. In terms of tissue distribution, widely expressed.

It is found in the endoplasmic reticulum membrane. The enzyme catalyses L-cysteinyl-[protein] + hexadecanoyl-CoA = S-hexadecanoyl-L-cysteinyl-[protein] + CoA. Its function is as follows. Palmitoyl acyltransferase that mediates palmitoylation of proteins such as PLN and ZDHHC6. Required during embryonic heart development and cardiac function, possibly by mediating palmitoylation of PLN, thereby affecting PLN phosphorylation and homooligomerization. Also required for eye development. Palmitoylates ZDHHC6, affecting the quaternary assembly of ZDHHC6, its localization, stability and function. May play a role in DNA damage response. May be involved in apoptosis regulation. Involved in the proliferation of neural stem cells by regulating the FGF/ERK pathway. This Homo sapiens (Human) protein is Palmitoyltransferase ZDHHC16.